Reading from the N-terminus, the 66-residue chain is Large ribosomal subunit protein bL33c (66 aa).

This sequence belongs to the bacterial ribosomal protein bL33 family.

It localises to the plastid. It is found in the chloroplast. The protein is Large ribosomal subunit protein bL33c of Angiopteris evecta (Mule's foot fern).